A 784-amino-acid polypeptide reads, in one-letter code: LPS-assembly protein LptD (784 aa).

A signal peptide spans 1–24; that stretch reads MKKRIPTLLATMIASALYSHQGLA. Cystine bridges form between Cys31-Cys724 and Cys173-Cys725.

It belongs to the LptD family. As to quaternary structure, component of the lipopolysaccharide transport and assembly complex. Interacts with LptE and LptA. Post-translationally, contains two intramolecular disulfide bonds.

The protein resides in the cell outer membrane. Its function is as follows. Together with LptE, is involved in the assembly of lipopolysaccharide (LPS) at the surface of the outer membrane. In Salmonella typhi, this protein is LPS-assembly protein LptD.